We begin with the raw amino-acid sequence, 121 residues long: Large ribosomal subunit protein uL22 (121 aa).

Belongs to the universal ribosomal protein uL22 family. Part of the 50S ribosomal subunit.

In terms of biological role, this protein binds specifically to 23S rRNA; its binding is stimulated by other ribosomal proteins, e.g. L4, L17, and L20. It is important during the early stages of 50S assembly. It makes multiple contacts with different domains of the 23S rRNA in the assembled 50S subunit and ribosome. Its function is as follows. The globular domain of the protein is located near the polypeptide exit tunnel on the outside of the subunit, while an extended beta-hairpin is found that lines the wall of the exit tunnel in the center of the 70S ribosome. In Synechococcus sp. (strain CC9311), this protein is Large ribosomal subunit protein uL22.